The chain runs to 153 residues: uncharacterized protein (153 aa).

Residues 16–40 (DEQTPLLNNDGIQRTPPSAEADMSL) form a disordered region. Residues 20 to 31 (PLLNNDGIQRTP) show a composition bias toward polar residues.

This is an uncharacterized protein from Schizosaccharomyces pombe (strain 972 / ATCC 24843) (Fission yeast).